We begin with the raw amino-acid sequence, 387 residues long: Succinate--CoA ligase [ADP-forming] subunit beta (387 aa).

In terms of domain architecture, ATP-grasp spans 9 to 245; sequence KDLLESYGLK…KSQENAKELK (237 aa). Residues lysine 46, 53 to 55, glutamate 100, tyrosine 103, and glutamate 108 each bind ATP; that span reads GRG. Residues asparagine 200 and aspartate 214 each contribute to the Mg(2+) site. Residues asparagine 265 and 322 to 324 contribute to the substrate site; that span reads GIV.

The protein belongs to the succinate/malate CoA ligase beta subunit family. In terms of assembly, heterotetramer of two alpha and two beta subunits. Requires Mg(2+) as cofactor.

It carries out the reaction succinate + ATP + CoA = succinyl-CoA + ADP + phosphate. It catalyses the reaction GTP + succinate + CoA = succinyl-CoA + GDP + phosphate. The protein operates within carbohydrate metabolism; tricarboxylic acid cycle; succinate from succinyl-CoA (ligase route): step 1/1. Its function is as follows. Succinyl-CoA synthetase functions in the citric acid cycle (TCA), coupling the hydrolysis of succinyl-CoA to the synthesis of either ATP or GTP and thus represents the only step of substrate-level phosphorylation in the TCA. The beta subunit provides nucleotide specificity of the enzyme and binds the substrate succinate, while the binding sites for coenzyme A and phosphate are found in the alpha subunit. This Francisella tularensis subsp. holarctica (strain FTNF002-00 / FTA) protein is Succinate--CoA ligase [ADP-forming] subunit beta.